Here is a 154-residue protein sequence, read N- to C-terminus: Aspartate carbamoyltransferase regulatory chain (154 aa).

4 residues coordinate Zn(2+): Cys111, Cys116, Cys139, and Cys142.

This sequence belongs to the PyrI family. In terms of assembly, contains catalytic and regulatory chains. Zn(2+) is required as a cofactor.

In terms of biological role, involved in allosteric regulation of aspartate carbamoyltransferase. The polypeptide is Aspartate carbamoyltransferase regulatory chain (Parabacteroides distasonis (strain ATCC 8503 / DSM 20701 / CIP 104284 / JCM 5825 / NCTC 11152)).